The chain runs to 424 residues: PDZ and LIM domain protein 7 (424 aa).

Positions 1–85 (MDSFKVVLEG…RLSLSLSRAQ (85 aa)) constitute a PDZ domain. Position 78 is a phosphoserine (Ser-78). Positions 81-98 (LSRAQPAQSKPQKVQTPD) are enriched in polar residues. Residues 81 to 221 (LSRAQPAQSK…HTQPATPTPM (141 aa)) form a disordered region. Position 96 is a phosphothreonine (Thr-96). Residues 110 to 123 (SKQRLMEDTEDWRP) show a composition bias toward basic and acidic residues. Pro residues predominate over residues 174 to 187 (EPWPGPTTPSPTSR). Residues 204–221 (KTSTVLTRHTQPATPTPM) show a composition bias toward polar residues. 3 LIM zinc-binding domains span residues 247-305 (PVCH…VRYA), 306-365 (PSCA…MFGT), and 366-424 (KCRG…FSHV).

As to quaternary structure, binds via its LIM zinc-binding 3 domain (LIM 3) domain to endocytic codes of INSR, but not with those of IGF1R, LDLR, TFRC, or EGFR. Interacts with various PKC isoforms through the LIM zinc-binding domains. Binds to RET in a phosphorylation-independent manner via its LIM zinc-binding 2 domain (LIM 2). Probably part of a complex with SHC and the RET dimer. Interacts with TPM2, TBX4 and TBX5.

It localises to the cytoplasm. The protein localises to the cytoskeleton. May function as a scaffold on which the coordinated assembly of proteins can occur. May play a role as an adapter that, via its PDZ domain, localizes LIM-binding proteins to actin filaments of both skeletal muscle and nonmuscle tissues. Involved in both of the two fundamental mechanisms of bone formation, direct bone formation (e.g. embryonic flat bones mandible and cranium), and endochondral bone formation (e.g. embryonic long bone development). Plays a role during fracture repair. Involved in BMP6 signaling pathway. This is PDZ and LIM domain protein 7 (PDLIM7) from Bos taurus (Bovine).